Reading from the N-terminus, the 1196-residue chain is DNA-directed RNA polymerase subunit 2 (1196 aa).

Residues 1074–1095 are disordered; the sequence is SRARGPTQLLTRQAPEGRSRDG. The C4-type zinc finger occupies 1133–1154; that stretch reads CDSCGQFAHKVPEKKYYTCTGC.

This sequence belongs to the RNA polymerase beta chain family.

The protein resides in the virion. The catalysed reaction is RNA(n) + a ribonucleoside 5'-triphosphate = RNA(n+1) + diphosphate. DNA-dependent RNA polymerase catalyzes the transcription of DNA into RNA using the four ribonucleoside triphosphates as substrates. This chain is DNA-directed RNA polymerase subunit 2 (RPO2), found in Acanthamoeba polyphaga mimivirus (APMV).